Consider the following 479-residue polypeptide: Gamma-aminobutyric acid receptor subunit rho-1 (479 aa).

The N-terminal stretch at 1 to 21 (MLAVPNMRFGIFLLWWGWVLA) is a signal peptide. Residues 22-280 (TESRMHWPGR…LYINFTLRRH (259 aa)) are Extracellular-facing. Residues 32–55 (EVHEMSKKGRPQRQRREVHEDAHK) form a disordered region. Residues 45 to 55 (QRREVHEDAHK) are compositionally biased toward basic and acidic residues. Arg-125 serves as a coordination point for 4-aminobutanoate. The N-linked (GlcNAc...) asparagine glycan is linked to Asn-140. Position 189 (Ser-189) interacts with 4-aminobutanoate. Cys-198 and Cys-212 are oxidised to a cystine. Glu-217 provides a ligand contact to 4-aminobutanoate. N-linked (GlcNAc...) asparagine glycans are attached at residues Asn-234 and Asn-274. A helical transmembrane segment spans residues 281-301 (IFFFLLQTYFPATLMVMLSWV). The Cytoplasmic portion of the chain corresponds to 302-313 (SFWIDRRAVPAR). The helical transmembrane segment at 314–334 (VPLGITTVLTMSTIITGVNAS) threads the bilayer. Residues 335–345 (MPRVSYIKAVD) lie on the Extracellular side of the membrane. The helical transmembrane segment at 346 to 366 (IYLWVSFVFVFLSVLEYAAVN) threads the bilayer. The Cytoplasmic portion of the chain corresponds to 367-457 (YLTTVQERKE…MRIDTHAIDK (91 aa)). A helical membrane pass occupies residues 458-478 (YSRIIFPAAYILFNLIYWSIF). A topological domain (extracellular) is located at residue Ser-479.

Belongs to the ligand-gated ion channel (TC 1.A.9) family. Gamma-aminobutyric acid receptor (TC 1.A.9.5) subfamily. GABRR1 sub-subfamily. In terms of assembly, three rho subunits (rho-1/GBRR1, rho-2/GBRR2 and rho-3/GBRR3) coassemble either to form functional homopentamers or heteropentamers. Rho-1/GBRR1 subunits can also associate with alpha-1/GBRA1 subunits to form a functional GABAAR. Interacts with SQSTM1. In terms of tissue distribution, highly expressed in the retina. Expressed in a lesser extent in brain, lung and thymus.

It is found in the postsynaptic cell membrane. The protein localises to the cell membrane. It carries out the reaction chloride(in) = chloride(out). With respect to regulation, inhibited by TPMPA, a rho-specific antagonist, when forming a homopentamer. In contrast with other GABAARs, rho-1 GABAAR is not inhibited by bicuculline, when forming a homopentamer. In terms of biological role, rho subunit of the pentameric ligand-gated chloride channels responsible for mediating the effects of gamma-aminobutyric acid (GABA), the major inhibitory neurotransmitter in the brain. Rho-containing GABA-gated chloride channels are a subclass of GABA(A) receptors (GABAARs) entirely composed of rho subunits, where GABA molecules bind at the rho intersubunit interfaces. When activated by GABA, rho-GABAARs selectively allow the flow of chloride anions across the cell membrane down their electrochemical gradient. Rho-1 subunits are primarily expressed in retina where rho-1-containing GABAARs may play a role in retinal neurotransmission. Rho-1 GABAARs are also involved in neuronal tonic (extrasynaptic) and phasic (synaptic) transmission in the Purkinje neurons of the cerebellum. Rho-1 GABAARs may also contribute to the regulation of glial development in the cerebellum by controlling extrasynaptic transmission. This chain is Gamma-aminobutyric acid receptor subunit rho-1, found in Homo sapiens (Human).